Consider the following 393-residue polypeptide: Protein TsgA (393 aa).

The next 12 membrane-spanning stretches (helical) occupy residues 11-31 (WISFLSYALTGALVIVTGMVM), 51-71 (FLNAGILISIFLNAWLMEIVP), 78-98 (FGFLLMVLAVAGLMFSHSLAL), 101-121 (AAMFILGVVSGITMSIGTFLV), 134-154 (LLFTDSFFSMAGMIFPMIAAF), 162-182 (WYWVYACIGLVYVAIFILTFG), 206-226 (IGVLFLSVAALCYILGQLGFI), 245-265 (TLVSNFWMSYMVGMWAFSFIL), 273-293 (ILTVLAGLAAILMYVFNTGTP), 297-317 (AWSILALGFFSSAIYTTIITL), 332-352 (FVLTCGTIGTMLTFVVTGPIV), and 361-381 (LLTANGLYAVVFVMCFLLGFV).

It belongs to the major facilitator superfamily. TsgA family.

The protein localises to the cell inner membrane. This Escherichia coli O139:H28 (strain E24377A / ETEC) protein is Protein TsgA.